Reading from the N-terminus, the 480-residue chain is Adenosylhomocysteinase (480 aa).

Residues T63, D142, and E203 each contribute to the substrate site. Position 204–206 (204–206 (TTT)) interacts with NAD(+). Positions 233 and 237 each coordinate substrate. Residues N238, 267–272 (GYGDVG), E290, N325, 346–348 (IGH), and N394 each bind NAD(+).

It belongs to the adenosylhomocysteinase family. It depends on NAD(+) as a cofactor.

It localises to the cytoplasm. The catalysed reaction is S-adenosyl-L-homocysteine + H2O = L-homocysteine + adenosine. It participates in amino-acid biosynthesis; L-homocysteine biosynthesis; L-homocysteine from S-adenosyl-L-homocysteine: step 1/1. May play a key role in the regulation of the intracellular concentration of adenosylhomocysteine. The polypeptide is Adenosylhomocysteinase (Xylella fastidiosa (strain 9a5c)).